The sequence spans 356 residues: S-adenosylmethionine:tRNA ribosyltransferase-isomerase (356 aa).

The protein belongs to the QueA family. As to quaternary structure, monomer.

It is found in the cytoplasm. The enzyme catalyses 7-aminomethyl-7-carbaguanosine(34) in tRNA + S-adenosyl-L-methionine = epoxyqueuosine(34) in tRNA + adenine + L-methionine + 2 H(+). It functions in the pathway tRNA modification; tRNA-queuosine biosynthesis. Functionally, transfers and isomerizes the ribose moiety from AdoMet to the 7-aminomethyl group of 7-deazaguanine (preQ1-tRNA) to give epoxyqueuosine (oQ-tRNA). The sequence is that of S-adenosylmethionine:tRNA ribosyltransferase-isomerase from Escherichia coli O1:K1 / APEC.